The following is an 88-amino-acid chain: MQAEIHPDYRQVVFIDASTGKKFLSASTVTSNDTTDFEGKEYPAIRMDITSDSHPFYTGKQKFTQADGAVDKFNKKFAGFGFKNNEDK.

It belongs to the bacterial ribosomal protein bL31 family. Type B subfamily. As to quaternary structure, part of the 50S ribosomal subunit.

This Leuconostoc mesenteroides subsp. mesenteroides (strain ATCC 8293 / DSM 20343 / BCRC 11652 / CCM 1803 / JCM 6124 / NCDO 523 / NBRC 100496 / NCIMB 8023 / NCTC 12954 / NRRL B-1118 / 37Y) protein is Large ribosomal subunit protein bL31B.